A 327-amino-acid polypeptide reads, in one-letter code: Chain length determinant protein (327 aa).

Residues 1 to 31 are Cytoplasmic-facing; it reads MTVDSNTSSGRGNDPEQIDLIELLLQLWRGK. Residues 32 to 52 traverse the membrane as a helical segment; that stretch reads MTIIVAVIIAILLAVGYLMIA. Residues 53–294 are Periplasmic-facing; the sequence is KEKWTSTAII…LPVRRDSPKT (242 aa). A helical transmembrane segment spans residues 295–315; it reads AITLVLAVLLGGMIGAGIVLG. Over 316–327 the chain is Cytoplasmic; it reads RNALRSYKPKAL.

The protein belongs to the WzzB/Cld/Rol family.

The protein resides in the cell inner membrane. Its pathway is bacterial outer membrane biogenesis; lipopolysaccharide biosynthesis. Confers a modal distribution of chain length on the O-antigen component of lipopolysaccharide (LPS). Gives rise to a reduced number of short chain molecules and increases in numbers of longer molecules, with a modal value of 20. The chain is Chain length determinant protein (wzzB) from Salmonella typhimurium (strain LT2 / SGSC1412 / ATCC 700720).